We begin with the raw amino-acid sequence, 34 residues long: Subtilosin-A (34 aa).

A cross-link (cyclopeptide (Asn-Gly)) is located at residues 1 to 34 (NKGCATCSIGIACLVDGPIPDFECAGATGLGLWG). Residues 7 to 28 (CSIGIACLVDGPIPDFECAGAT) constitute a cross-link (2-cysteinyl-D-allo-threonine (Cys-Thr)). The 2-cysteinyl-L-phenylalanine (Cys-Phe) cross-link spans 13 to 22 (CLVDGPIPDF).

The protein belongs to the bacteriocin class V family. Post-translationally, alpha-amino of Asn-1 is covalently linked with the carboxyl of Gly-34 to form a cyclopeptide. Thioether cross-links are formed between cysteines and the alpha-carbons of other amino acids, Cys-7 to Thr-28 and Cys-13 to Phe-22. In forming this cross-link, Thr-28 is converted to D-amino acid.

Its subcellular location is the secreted. Its function is as follows. Has bactericidal activity against some Gram-positive bacteria. This is Subtilosin-A from Cytobacillus firmus (Bacillus firmus).